A 207-amino-acid chain; its full sequence is Chloramphenicol acetyltransferase (207 aa).

Histidine 186 acts as the Proton acceptor in catalysis.

It belongs to the chloramphenicol acetyltransferase family. As to quaternary structure, homotrimer.

It carries out the reaction chloramphenicol + acetyl-CoA = chloramphenicol 3-acetate + CoA. In terms of biological role, this enzyme is an effector of chloramphenicol resistance in bacteria. In Campylobacter coli, this protein is Chloramphenicol acetyltransferase.